The following is a 297-amino-acid chain: Averufin oxidase stcO (297 aa).

Residues 277–297 (VVVLGVCILLLLGGLLYSIKA) form a helical membrane-spanning segment.

Belongs to the avfA family.

It is found in the membrane. It participates in mycotoxin biosynthesis; sterigmatocystin biosynthesis. Functionally, averufin oxidase; part of the gene cluster that mediates the biosynthesis of sterigmatocystin (ST), a polyketide-derived furanocoumarin which is part of the most toxic and carcinogenic compounds among the known mycotoxins. The first step in the biosynthesis of sterigmatocystin is the production of hexanoate by the fatty acid synthase (FAS) units stcJ and stcK. The polyketide backbone is assembled by the non-reducing polyketide synthase stcA by condensation of the starter hexanoyl-CoA and 7 malonyl-CoA extender units followed by cyclization and release of norsolorinic acid. Norsolorinic acid is the first stable intermediate in the biosynthesis of sterigmatocystin and is converted into averantin (AVN) by the ketoreductase stcE which reduces the hexanoate ketone to an alcohol. Averantin is then oxidized into 5'-hydroxyaverantin (HAVN) by the cytochrome P450 monooxygenase stcF. 5'-hydroxyaverantin is further converted to 5'-oxyaverantin (OAVN) by the 5'-hydroxyaverantin dehydrogenase stcG. The next step is the conversion of OAVN into averufin (AVF) which is catalyzed by a yet to be identified enzyme. The cytochrome P450 monooxygenase stcB and the flavin-binding monooxygenase stcW are both required for the conversion of averufin to 1-hydroxyversicolorone. The esterase stcI probably catalyzes the formation of versiconal hemiacetal acetate from 1-hydroxyversicolorone. The oxydoreductase stcN then probably catalyzes the biosynthetic step from versiconal to versicolorin B (VERB). The next step is performed by the versicolorin B desaturase stcL to produce versicolorin A (VERA). The ketoreductase stcU and the cytochrome P450 monooxygenase stcS are involved in the conversion of versicolorin A to demethylsterigmatocystin. The Baeyer-Villiger oxidas stcQ and the reductase stcR might be involved in the biosynthetic step from versicolorin A to demethylsterigmatocystin. The final step in the biosynthesis of sterigmatocystin is the methylation of demethylsterigmatocystin catalyzed by the methyltransferase stcP. The protein is Averufin oxidase stcO of Emericella nidulans (strain FGSC A4 / ATCC 38163 / CBS 112.46 / NRRL 194 / M139) (Aspergillus nidulans).